We begin with the raw amino-acid sequence, 379 residues long: Protein RecA (379 aa).

ATP is bound at residue 79-86 (GPESSGKT).

This sequence belongs to the RecA family.

The protein localises to the cytoplasm. In terms of biological role, can catalyze the hydrolysis of ATP in the presence of single-stranded DNA, the ATP-dependent uptake of single-stranded DNA by duplex DNA, and the ATP-dependent hybridization of homologous single-stranded DNAs. It interacts with LexA causing its activation and leading to its autocatalytic cleavage. This Streptococcus thermophilus protein is Protein RecA.